The following is a 144-amino-acid chain: Large ribosomal subunit protein uL15 (144 aa).

Positions Met-1–Gly-52 are disordered. Residues Arg-21–Gly-31 show a composition bias toward gly residues.

The protein belongs to the universal ribosomal protein uL15 family. In terms of assembly, part of the 50S ribosomal subunit.

In terms of biological role, binds to the 23S rRNA. The polypeptide is Large ribosomal subunit protein uL15 (Haemophilus ducreyi (strain 35000HP / ATCC 700724)).